A 337-amino-acid polypeptide reads, in one-letter code: Tetraacyldisaccharide 4'-kinase (337 aa).

Residue 55 to 62 participates in ATP binding; sequence TAGGNGKT.

The protein belongs to the LpxK family.

The enzyme catalyses a lipid A disaccharide + ATP = a lipid IVA + ADP + H(+). It functions in the pathway glycolipid biosynthesis; lipid IV(A) biosynthesis; lipid IV(A) from (3R)-3-hydroxytetradecanoyl-[acyl-carrier-protein] and UDP-N-acetyl-alpha-D-glucosamine: step 6/6. Transfers the gamma-phosphate of ATP to the 4'-position of a tetraacyldisaccharide 1-phosphate intermediate (termed DS-1-P) to form tetraacyldisaccharide 1,4'-bis-phosphate (lipid IVA). In Sodalis glossinidius (strain morsitans), this protein is Tetraacyldisaccharide 4'-kinase.